The sequence spans 235 residues: Thrombin-like enzyme bilineobin (235 aa).

Residues 1-227 (IIGGDECNIN…HLDWIQSIIA (227 aa)) form the Peptidase S1 domain. 6 disulfide bridges follow: C7–C141, C28–C44, C78–C234, C120–C188, C152–C167, and C178–C203. The active-site Charge relay system is H43. Residues N45, N57, and N81 are each glycosylated (N-linked (GlcNAc...) asparagine). D88 serves as the catalytic Charge relay system. N132 and N148 each carry an N-linked (GlcNAc...) asparagine glycan. Residue S182 is the Charge relay system of the active site. A glycan (N-linked (GlcNAc...) asparagine) is linked at N229.

This sequence belongs to the peptidase S1 family. Snake venom subfamily. Monomer. In terms of processing, glycosylated. As to expression, expressed by the venom gland.

It is found in the secreted. Not inhibited by hirudin. Thrombin-like snake venom serine protease that has coagulant activity by releasing fibrinopeptides A and B from fibrinogen alpha (FGA) and beta (FGB), with a preference for beta chain. The sequence is that of Thrombin-like enzyme bilineobin from Agkistrodon bilineatus (Cantil).